The sequence spans 420 residues: Adenylosuccinate synthetase (420 aa).

Residues 11-17 (GDEGKGK) and 39-41 (GHT) contribute to the GTP site. Catalysis depends on Asp12, which acts as the Proton acceptor. Mg(2+) contacts are provided by Asp12 and Gly39. IMP-binding positions include 12–15 (DEGK), 37–40 (NAGH), Thr129, Arg143, Asn218, Thr233, and Arg297. The active-site Proton donor is the His40. 293–299 (VTTGRKR) is a substrate binding site. Residues Arg299, 325–327 (KLD), and 407–409 (GTG) each bind GTP.

Belongs to the adenylosuccinate synthetase family. Homodimer. Mg(2+) serves as cofactor.

Its subcellular location is the cytoplasm. It catalyses the reaction IMP + L-aspartate + GTP = N(6)-(1,2-dicarboxyethyl)-AMP + GDP + phosphate + 2 H(+). Its pathway is purine metabolism; AMP biosynthesis via de novo pathway; AMP from IMP: step 1/2. Functionally, plays an important role in the de novo pathway and in the salvage pathway of purine nucleotide biosynthesis. Catalyzes the first committed step in the biosynthesis of AMP from IMP. This Uncinocarpus reesii (strain UAMH 1704) protein is Adenylosuccinate synthetase.